Reading from the N-terminus, the 200-residue chain is uncharacterized protein (200 aa).

The signal sequence occupies residues 1–24; sequence MAIDKLPLLLFLSILLCLNRPVLS. N-linked (GlcNAc...) asparagine glycosylation is found at N44, N72, N99, N124, and N135. Residue S174 is the site of GPI-anchor amidated serine attachment. Residues 175–200 constitute a propeptide, removed in mature form; that stretch reads NGFTFGIGLVSYLVIFMYSSFCFFLF.

Belongs to the UPF0277 family.

It is found in the cell membrane. This is an uncharacterized protein from Arabidopsis thaliana (Mouse-ear cress).